We begin with the raw amino-acid sequence, 221 residues long: CASP-like protein 4C1 (221 aa).

The tract at residues 1-21 (MDSPESSDRGLNPMTPDHGGH) is disordered. At 1-54 (MDSPESSDRGLNPMTPDHGGHNGKVVHYFGQGVEGGPASPRKLGHGHLHPKANT) the chain is on the cytoplasmic side. A helical membrane pass occupies residues 55–75 (ALLLLRLLTFAFSLASLVIMA). Residues 76–101 (TNSATTTATAGRHRTVNWVDFDTYRY) lie on the Extracellular side of the membrane. The chain crosses the membrane as a helical span at residues 102–122 (VLAACAIVCLYSFAEIGLGLW). Residues 123-144 (YLLKGRMVMPESMAHWFDFGHD) lie on the Cytoplasmic side of the membrane. A helical membrane pass occupies residues 145–165 (QGFAYLIFSACSGATAVAHNL). The Extracellular segment spans residues 166-189 (RERHILIHGMYGCDEANSFCMKAE). A helical membrane pass occupies residues 190-210 (ISIGLAFGAFLFIALSSLLSG). Over 211–221 (YRLVKWLILGP) the chain is Cytoplasmic.

Belongs to the Casparian strip membrane proteins (CASP) family. As to quaternary structure, homodimer and heterodimers.

Its subcellular location is the cell membrane. This chain is CASP-like protein 4C1, found in Pteridium aquilinum subsp. aquilinum (Bracken fern).